A 124-amino-acid chain; its full sequence is MATTNQLIRKGRKVLKEKSGVPALQACPQRRGVCTRVYTTTPKKPNSAMRKVCRVRLTSGYEVSSYIGGEGHNLQEHSVVLIRGGRVKDLPGVRYHTVRGALDCAGVKDRKQGRSKYGAKKPKA.

The residue at position 89 (D89) is a 3-methylthioaspartic acid.

This sequence belongs to the universal ribosomal protein uS12 family. As to quaternary structure, part of the 30S ribosomal subunit. Contacts proteins S8 and S17. May interact with IF1 in the 30S initiation complex.

Its function is as follows. With S4 and S5 plays an important role in translational accuracy. Interacts with and stabilizes bases of the 16S rRNA that are involved in tRNA selection in the A site and with the mRNA backbone. Located at the interface of the 30S and 50S subunits, it traverses the body of the 30S subunit contacting proteins on the other side and probably holding the rRNA structure together. The combined cluster of proteins S8, S12 and S17 appears to hold together the shoulder and platform of the 30S subunit. The sequence is that of Small ribosomal subunit protein uS12 from Psychrobacter sp. (strain PRwf-1).